The primary structure comprises 90 residues: Acylphosphatase (90 aa).

The region spanning 3–88 is the Acylphosphatase-like domain; it reads TWHMTAHGRV…GKFEDFDLRP (86 aa). Active-site residues include Arg18 and Asn36.

This sequence belongs to the acylphosphatase family.

The enzyme catalyses an acyl phosphate + H2O = a carboxylate + phosphate + H(+). The protein is Acylphosphatase (acyP) of Cupriavidus pinatubonensis (strain JMP 134 / LMG 1197) (Cupriavidus necator (strain JMP 134)).